The following is a 504-amino-acid chain: MEEFQGYLELDRFRQHDFLYPLIFREYIYALAHDHGLNRVILLENVTYDNKSSLLIVKRLITRMYQQNHLMISANDSNQNKFLGYNKNLYSQIISEGFAIIAEIPFSLRLIFSLEGSQIVRSYNLRSIHSIFPFLEDKFPHLNYVADVLIPYPIHLEILVQTLRYRVKDASSLHLLRFFLHEYSNGNILIILNKSISIFSKSNSRLLLFLYNSYICEYESVFLFLRNQSNHLRLTSSGVLFERIYLHRKMEDLVEVFVNDFQGILCFLKDPFIHYVRYQGKSILASKDTPLLMNKWKYYLVSLWQCHFFVWSRPGRIYINQLSKHSLDFLGYFSSVPLNPSMVRSQMLENSFIINNAPKKLDTIVTIIPLIGSLAKAKFCNALGHPISKPTWADLSDFDIINRFVRICKNLSHYYSGSSKKKGMYRIKYILRLSCVKTLARKHKSTIRAFLKRLGSELFEEFFTEEEEFLSLIFPRTSFTLRRLYRGRVWYLDIICMNGLANHE.

This sequence belongs to the intron maturase 2 family. MatK subfamily.

Its subcellular location is the plastid. It localises to the chloroplast. Usually encoded in the trnK tRNA gene intron. Probably assists in splicing its own and other chloroplast group II introns. This chain is Maturase K, found in Betula papyrifera (Paper birch).